The sequence spans 277 residues: GPALPP motifs-containing protein 1 (277 aa).

Positions 1-240 (MARDLIGPAL…VWTDTPADRE (240 aa)) are disordered. Position 2 is an N-acetylalanine (alanine 2). Residues 7–12 (GPALPP) carry the GPALPP motif 1 motif. Phosphoserine is present on serine 28. The GPALPP motif 2 motif lies at 32–37 (GPALPP). Acidic residues-rich tracts occupy residues 60–69 (GNQESEEDDT) and 81–90 (DDDDDDDDEG). The GPALPP motif 3 motif lies at 93–98 (GPALPP). Position 106 is a phosphoserine (serine 106). Over residues 108 to 117 (PRPMIGPALP) the composition is skewed to pro residues. The short motif at 113–118 (GPALPP) is the GPALPP motif 4 element. Residues serine 138 and serine 143 each carry the phosphoserine modification. The residue at position 147 (threonine 147) is a Phosphothreonine. 2 positions are modified to phosphoserine: serine 149 and serine 150. Residues 172–196 (EFEKRAQRMKEKLTKGDDDSSKPIT) show a composition bias toward basic and acidic residues.

The polypeptide is GPALPP motifs-containing protein 1 (GPALPP1) (Bos taurus (Bovine)).